A 502-amino-acid polypeptide reads, in one-letter code: Probable glycine dehydrogenase (decarboxylating) subunit 2 (502 aa).

Lys273 carries the N6-(pyridoxal phosphate)lysine modification.

This sequence belongs to the GcvP family. C-terminal subunit subfamily. The glycine cleavage system is composed of four proteins: P, T, L and H. In this organism, the P 'protein' is a heterodimer of two subunits. Pyridoxal 5'-phosphate is required as a cofactor.

The enzyme catalyses N(6)-[(R)-lipoyl]-L-lysyl-[glycine-cleavage complex H protein] + glycine + H(+) = N(6)-[(R)-S(8)-aminomethyldihydrolipoyl]-L-lysyl-[glycine-cleavage complex H protein] + CO2. In terms of biological role, the glycine cleavage system catalyzes the degradation of glycine. The P protein binds the alpha-amino group of glycine through its pyridoxal phosphate cofactor; CO(2) is released and the remaining methylamine moiety is then transferred to the lipoamide cofactor of the H protein. The chain is Probable glycine dehydrogenase (decarboxylating) subunit 2 from Thermococcus onnurineus (strain NA1).